The sequence spans 630 residues: Multidrug transporter TPO3 (630 aa).

Residues 1-35 are compositionally biased toward polar residues; sequence MVDQESLVSFSSETSQSINSDIDIESQQQPRQYIP. Disordered stretches follow at residues 1 to 46 and 107 to 157; these read MVDQ…KERL and TSTA…NQQP. A compositionally biased stretch (basic and acidic residues) spans 37 to 46; sequence NEKDGNKERL. Low complexity predominate over residues 125–137; the sequence is RRSQNIAASSNSS. A glycan (N-linked (GlcNAc...) asparagine) is linked at Asn-135. 12 helical membrane passes run 190–210, 222–242, 252–272, 282–302, 312–332, 342–362, 423–443, 453–473, 494–514, 519–539, 553–575, and 587–607; these read ILSCLVICVAYGSACITGGLF, AAILSCSLMVIGFSLGPLIWS, LAYFISMGLYTIFNIPCALSP, FLCGVFSSSGLCLVGGSIADM, IAFFAFAPYTGPIIGPLVNGF, LIFWINMAFAGVMWIIVAFIP, FYVCLIYSLLYAFFFAFPVVF, LIGLMFIPILIGATMALATTF, LFGAMIGAPFAAAALWILGAT, IIWVGPASSGLAFGYGMVLIY, YASSALATKVFLRSAGGAAFPLF, and WASWLLAFISTAMILLPFGFY.

The protein belongs to the major facilitator superfamily. DHA1 family. Polyamines/proton antiporter (TC 2.A.1.2.16) subfamily.

The protein localises to the cell membrane. Functionally, cell membrane polyamine/proton antiporter, involved in the detoxification of excess polyamines in the cytoplasm. Involved in the resistance to the imidazole antifungal drugs tioconazole, miconazole, clotrimazole and ketoconazole; to the triazole fluconazole; but not to the antifungals flucytosine or amphotericin B. Plays a role in spermine homeostasis, but spermine accumulation in response to clotrimazole is independent of TPO3. This chain is Multidrug transporter TPO3, found in Candida glabrata (strain ATCC 2001 / BCRC 20586 / JCM 3761 / NBRC 0622 / NRRL Y-65 / CBS 138) (Yeast).